A 162-amino-acid chain; its full sequence is AP-1 complex subunit sigma-1 (162 aa).

The protein belongs to the adaptor complexes small subunit family. As to quaternary structure, adaptor protein complex 1 (AP-1) is a heterotetramer composed of two large adaptins (gamma-type subunit apl4 and beta-type subunit apl2), a medium adaptin (mu-type subunit apm1) and a small adaptin (sigma-type subunit aps1). AP-1 interacts with clathrin.

It is found in the cytoplasm. The protein localises to the nucleus. It localises to the cytoplasmic vesicle. Its subcellular location is the clathrin-coated vesicle membrane. The protein resides in the endosome. It is found in the golgi apparatus. Functionally, component of the AP-1 complex which links clathrin to receptors in coated vesicles. Clathrin-associated protein complexes are believed to interact with the cytoplasmic tails of membrane proteins, leading to their selection and concentration. This is AP-1 complex subunit sigma-1 (vas2) from Schizosaccharomyces pombe (strain 972 / ATCC 24843) (Fission yeast).